A 428-amino-acid chain; its full sequence is Glutamate-1-semialdehyde 2,1-aminomutase (428 aa).

At Lys-267 the chain carries N6-(pyridoxal phosphate)lysine.

Belongs to the class-III pyridoxal-phosphate-dependent aminotransferase family. HemL subfamily. Homodimer. The cofactor is pyridoxal 5'-phosphate.

It is found in the cytoplasm. The enzyme catalyses (S)-4-amino-5-oxopentanoate = 5-aminolevulinate. It functions in the pathway porphyrin-containing compound metabolism; protoporphyrin-IX biosynthesis; 5-aminolevulinate from L-glutamyl-tRNA(Glu): step 2/2. The polypeptide is Glutamate-1-semialdehyde 2,1-aminomutase (Pelobacter propionicus (strain DSM 2379 / NBRC 103807 / OttBd1)).